The sequence spans 75 residues: Small ribosomal subunit protein bS18 (75 aa).

The protein belongs to the bacterial ribosomal protein bS18 family. Part of the 30S ribosomal subunit. Forms a tight heterodimer with protein bS6.

Binds as a heterodimer with protein bS6 to the central domain of the 16S rRNA, where it helps stabilize the platform of the 30S subunit. The sequence is that of Small ribosomal subunit protein bS18 from Shewanella halifaxensis (strain HAW-EB4).